Reading from the N-terminus, the 342-residue chain is UDP-N-acetylenolpyruvoylglucosamine reductase (342 aa).

Residues 13 to 183 (IDHNAQHIVC…VAVGLRLPKE (171 aa)) enclose the FAD-binding PCMH-type domain. The active site involves Arg159. Position 190 (Tyr190) interacts with substrate. Ser229 acts as the Proton donor in catalysis. The active site involves Glu325.

The protein belongs to the MurB family. As to quaternary structure, monomer. It depends on FAD as a cofactor.

Its subcellular location is the cytoplasm. It catalyses the reaction UDP-N-acetyl-alpha-D-muramate + NADP(+) = UDP-N-acetyl-3-O-(1-carboxyvinyl)-alpha-D-glucosamine + NADPH + H(+). It functions in the pathway cell wall biogenesis; peptidoglycan biosynthesis. Functionally, cell wall formation. The sequence is that of UDP-N-acetylenolpyruvoylglucosamine reductase from Escherichia coli O157:H7.